The chain runs to 92 residues: Small ribosomal subunit protein uS19c (92 aa).

This sequence belongs to the universal ribosomal protein uS19 family.

The protein localises to the plastid. The protein resides in the chloroplast. Functionally, protein S19 forms a complex with S13 that binds strongly to the 16S ribosomal RNA. In Chaetosphaeridium globosum (Charophycean green alga), this protein is Small ribosomal subunit protein uS19c.